A 716-amino-acid chain; its full sequence is Polyribonucleotide nucleotidyltransferase (716 aa).

Mg(2+)-binding residues include D488 and D494. A KH domain is found at P555–I614. The region spanning G624–K692 is the S1 motif domain. The interval D695 to T716 is disordered.

Belongs to the polyribonucleotide nucleotidyltransferase family. Mg(2+) serves as cofactor.

The protein localises to the cytoplasm. It carries out the reaction RNA(n+1) + phosphate = RNA(n) + a ribonucleoside 5'-diphosphate. Functionally, involved in mRNA degradation. Catalyzes the phosphorolysis of single-stranded polyribonucleotides processively in the 3'- to 5'-direction. This Caulobacter sp. (strain K31) protein is Polyribonucleotide nucleotidyltransferase.